Reading from the N-terminus, the 228-residue chain is Protein Thf1 (228 aa).

The stretch at 201–223 (IKRSKEVVDELSQTERRKREERA) forms a coiled coil. The interval 209 to 228 (DELSQTERRKREERAVSQPG) is disordered.

The protein belongs to the THF1 family.

May be involved in photosynthetic membrane biogenesis. In Gloeobacter violaceus (strain ATCC 29082 / PCC 7421), this protein is Protein Thf1.